The following is a 354-amino-acid chain: S-adenosylmethionine:tRNA ribosyltransferase-isomerase (354 aa).

Belongs to the QueA family. In terms of assembly, monomer.

It localises to the cytoplasm. It catalyses the reaction 7-aminomethyl-7-carbaguanosine(34) in tRNA + S-adenosyl-L-methionine = epoxyqueuosine(34) in tRNA + adenine + L-methionine + 2 H(+). It participates in tRNA modification; tRNA-queuosine biosynthesis. Its function is as follows. Transfers and isomerizes the ribose moiety from AdoMet to the 7-aminomethyl group of 7-deazaguanine (preQ1-tRNA) to give epoxyqueuosine (oQ-tRNA). This Methylobacterium radiotolerans (strain ATCC 27329 / DSM 1819 / JCM 2831 / NBRC 15690 / NCIMB 10815 / 0-1) protein is S-adenosylmethionine:tRNA ribosyltransferase-isomerase.